We begin with the raw amino-acid sequence, 178 residues long: Interleukin-10 (178 aa).

The signal sequence occupies residues 1–18 (MHSSALLCCLVLLTGVRA). 2 disulfides stabilise this stretch: Cys-30–Cys-126 and Cys-80–Cys-132. Asn-134 is a glycosylation site (N-linked (GlcNAc...) asparagine).

This sequence belongs to the IL-10 family. Homodimer. Interacts with IL10RA and IL10RB.

The protein localises to the secreted. Major immune regulatory cytokine that acts on many cells of the immune system where it has profound anti-inflammatory functions, limiting excessive tissue disruption caused by inflammation. Mechanistically, IL10 binds to its heterotetrameric receptor comprising IL10RA and IL10RB leading to JAK1 and STAT2-mediated phosphorylation of STAT3. In turn, STAT3 translocates to the nucleus where it drives expression of anti-inflammatory mediators. Targets antigen-presenting cells (APCs) such as macrophages and monocytes and inhibits their release of pro-inflammatory cytokines including granulocyte-macrophage colony-stimulating factor /GM-CSF, granulocyte colony-stimulating factor/G-CSF, IL-1 alpha, IL-1 beta, IL-6, IL-8 and TNF-alpha. Also interferes with antigen presentation by reducing the expression of MHC-class II and co-stimulatory molecules, thereby inhibiting their ability to induce T cell activation. In addition, controls the inflammatory response of macrophages by reprogramming essential metabolic pathways including mTOR signaling. This is Interleukin-10 (IL10) from Macaca fascicularis (Crab-eating macaque).